The sequence spans 470 residues: 1-aminocyclopropane-1-carboxylate synthase 9 (470 aa).

E47 and Y85 together coordinate substrate. An N6-(pyridoxal phosphate)lysine modification is found at K272.

Belongs to the class-I pyridoxal-phosphate-dependent aminotransferase family. Homodimer and heterodimer. In vivo, the relevance of heterodimerization with other ACS enzymes is however unsure. Interacts (via its C-terminal region) with FEI1, FEI2, ETO1 and EOL1. Requires pyridoxal 5'-phosphate as cofactor. In terms of processing, may be processed at its C-terminus. Expressed in roots and siliques.

The catalysed reaction is S-adenosyl-L-methionine = 1-aminocyclopropane-1-carboxylate + S-methyl-5'-thioadenosine + H(+). It participates in alkene biosynthesis; ethylene biosynthesis via S-adenosyl-L-methionine; ethylene from S-adenosyl-L-methionine: step 1/2. In terms of biological role, 1-aminocyclopropane-1-carboxylate synthase (ACS) enzymes catalyze the conversion of S-adenosyl-L-methionine (SAM) into 1-aminocyclopropane-1-carboxylate (ACC), a direct precursor of ethylene. This chain is 1-aminocyclopropane-1-carboxylate synthase 9 (ACS9), found in Arabidopsis thaliana (Mouse-ear cress).